We begin with the raw amino-acid sequence, 132 residues long: UPF0719 inner membrane protein YjfL (132 aa).

Over 1–6 (MHILDS) the chain is Periplasmic. A helical transmembrane segment spans residues 7–27 (LLAFSAYFFIGVAMVIIFLFI). At 28 to 46 (YSKITPHNEWQLIKNNNTA) the chain is on the cytoplasmic side. Residues 47–67 (ASLAFSGTLLGYVIPLSSAAI) form a helical membrane-spanning segment. The Periplasmic segment spans residues 68 to 71 (NAVS). A helical membrane pass occupies residues 72 to 92 (IPDYFAWGGIALVIQLLVFAG). Residues 93-109 (VRLYMPALSEKIINHNT) are Cytoplasmic-facing. A helical membrane pass occupies residues 110–130 (AAGMFMGTAALAGGIFNAACM). The Periplasmic segment spans residues 131–132 (TW).

This sequence belongs to the UPF0719 family.

The protein resides in the cell inner membrane. The protein is UPF0719 inner membrane protein YjfL (yjfL) of Escherichia coli O157:H7.